A 350-amino-acid chain; its full sequence is m7GpppX diphosphatase (350 aa).

Ser-2 bears the N-acetylserine mark. The residue at position 60 (Ser-60) is a Phosphoserine. Thr-66 bears the Phosphothreonine mark. Residue Thr-66 is modified to Phosphothreonine; by YAK1. At Tyr-70 the chain carries Phosphotyrosine. Thr-120 carries the phosphothreonine modification. Substrate is bound by residues Glu-171, Lys-196, and 259–270 (HYQPSYYHFHIH). The Histidine triad motif motif lies at 266-270 (HFHIH). His-268 acts as the Nucleophile in catalysis.

This sequence belongs to the HIT family. Homodimer. Forms heterodimer with DCS2; the interaction inhibits the DCS1 scavenger decapping activity during post-diauxic growth. Phosphorylated. Phosphorylation occurs upon glucose deprivation.

The protein resides in the cytoplasm. The protein localises to the perinuclear region. Its subcellular location is the P-body. The catalysed reaction is a 5'-end (N(7)-methyl 5'-triphosphoguanosine)-ribonucleoside in mRNA + H2O = N(7)-methyl-GMP + a 5'-end diphospho-ribonucleoside in mRNA + 2 H(+). With respect to regulation, the hydrolytic product 7-methylguanosine diphosphate (m7GDP) efficiently inhibits the decapping scavenger activity and acts as a competitive inhibitor in vitro. Functionally, decapping scavenger enzyme that catalyzes the cleavage of a residual cap structure following the degradation of mRNAs by the 3'-&gt;5' exosome-mediated mRNA decay pathway. Hydrolyzes cap analog structures like 7-methylguanosine nucleoside triphosphate (m7GpppG) and tri-methyl guanosine nucleoside triphosphate (m3(2,2,7)GpppG) with up to 10 nucleotide substrates (small capped oligoribonucleotides) and specifically releases 5'-phosphorylated RNA fragments and 7-methylguanosine monophosphate (m7GMP) or tri-methyl guanosine nucleoside monophosphate (m3(2,2,7)GMP), respectively. Does not hydrolyze unmethylated cap analog (GpppG) and shows no decapping activity on intact m7GpppG-capped mRNA molecules longer than 25 nucleotides. Does not hydrolyze 7-methylguanosine diphosphate (m7GDP) and tri-methylguanosine diphosphate (m3(2,2,7)GDP) to (m(7)GMP) and m3(2,2,7)GMP, respectively. May also play a role in the 5'-&gt;3 mRNA decay pathway; m7GDP, the downstream product released by the 5'-&gt;3' mRNA mediated decapping activity, may be also converted by DCS1 to m7GMP. Binds to m7GpppG and strongly to m7GDP. May also regulate the 5'-&gt;3' exoribonucleolytic mRNA decay pathway in a cap-independent manner. Negatively regulates trehalase activity. The polypeptide is m7GpppX diphosphatase (Saccharomyces cerevisiae (strain ATCC 204508 / S288c) (Baker's yeast)).